Reading from the N-terminus, the 69-residue chain is DNA gyrase inhibitor YacG (69 aa).

Residues C14, C17, C33, and C37 each coordinate Zn(2+). The tract at residues 46-69 (ADEEKSIPGAPDMSDSDGWSEDQY) is disordered. The segment covering 59–69 (SDSDGWSEDQY) has biased composition (acidic residues).

The protein belongs to the DNA gyrase inhibitor YacG family. In terms of assembly, interacts with GyrB. It depends on Zn(2+) as a cofactor.

In terms of biological role, inhibits all the catalytic activities of DNA gyrase by preventing its interaction with DNA. Acts by binding directly to the C-terminal domain of GyrB, which probably disrupts DNA binding by the gyrase. The sequence is that of DNA gyrase inhibitor YacG from Aliivibrio fischeri (strain MJ11) (Vibrio fischeri).